The chain runs to 158 residues: Urease accessory protein UreE (158 aa).

Belongs to the UreE family.

It localises to the cytoplasm. Involved in urease metallocenter assembly. Binds nickel. Probably functions as a nickel donor during metallocenter assembly. The sequence is that of Urease accessory protein UreE from Klebsiella pneumoniae subsp. pneumoniae (strain ATCC 700721 / MGH 78578).